The following is a 1173-amino-acid chain: DNA-directed RNA polymerase subunit beta (1173 aa).

The protein belongs to the RNA polymerase beta chain family. The RNAP catalytic core consists of 2 alpha, 1 beta, 1 beta' and 1 omega subunit. When a sigma factor is associated with the core the holoenzyme is formed, which can initiate transcription.

It catalyses the reaction RNA(n) + a ribonucleoside 5'-triphosphate = RNA(n+1) + diphosphate. In terms of biological role, DNA-dependent RNA polymerase catalyzes the transcription of DNA into RNA using the four ribonucleoside triphosphates as substrates. This is DNA-directed RNA polymerase subunit beta from Kosmotoga olearia (strain ATCC BAA-1733 / DSM 21960 / TBF 19.5.1).